Reading from the N-terminus, the 243-residue chain is 1-(5-phosphoribosyl)-5-[(5-phosphoribosylamino)methylideneamino] imidazole-4-carboxamide isomerase (243 aa).

Residue aspartate 8 is the Proton acceptor of the active site. The Proton donor role is filled by aspartate 130.

The protein belongs to the HisA/HisF family.

It is found in the cytoplasm. It catalyses the reaction 1-(5-phospho-beta-D-ribosyl)-5-[(5-phospho-beta-D-ribosylamino)methylideneamino]imidazole-4-carboxamide = 5-[(5-phospho-1-deoxy-D-ribulos-1-ylimino)methylamino]-1-(5-phospho-beta-D-ribosyl)imidazole-4-carboxamide. It participates in amino-acid biosynthesis; L-histidine biosynthesis; L-histidine from 5-phospho-alpha-D-ribose 1-diphosphate: step 4/9. The sequence is that of 1-(5-phosphoribosyl)-5-[(5-phosphoribosylamino)methylideneamino] imidazole-4-carboxamide isomerase from Saccharophagus degradans (strain 2-40 / ATCC 43961 / DSM 17024).